The sequence spans 134 residues: Profilin-2 (134 aa).

Residues cysteine 13 and cysteine 118 are joined by a disulfide bond. The Involved in PIP2 interaction signature appears at alanine 84–threonine 100. At threonine 114 the chain carries Phosphothreonine.

This sequence belongs to the profilin family. Occurs in many kinds of cells as a complex with monomeric actin in a 1:1 ratio. Phosphorylated by MAP kinases.

It is found in the cytoplasm. The protein localises to the cytoskeleton. Functionally, binds to actin and affects the structure of the cytoskeleton. At high concentrations, profilin prevents the polymerization of actin, whereas it enhances it at low concentrations. In Olea europaea (Common olive), this protein is Profilin-2.